Consider the following 190-residue polypeptide: Ribose 1,5-bisphosphate phosphokinase PhnN (190 aa).

11–18 (GPSGSGKD) contributes to the ATP binding site.

This sequence belongs to the ribose 1,5-bisphosphokinase family.

The enzyme catalyses alpha-D-ribose 1,5-bisphosphate + ATP = 5-phospho-alpha-D-ribose 1-diphosphate + ADP. Its pathway is metabolic intermediate biosynthesis; 5-phospho-alpha-D-ribose 1-diphosphate biosynthesis; 5-phospho-alpha-D-ribose 1-diphosphate from D-ribose 5-phosphate (route II): step 3/3. In terms of biological role, catalyzes the phosphorylation of ribose 1,5-bisphosphate to 5-phospho-D-ribosyl alpha-1-diphosphate (PRPP). This is Ribose 1,5-bisphosphate phosphokinase PhnN from Thiobacillus denitrificans (strain ATCC 25259 / T1).